We begin with the raw amino-acid sequence, 253 residues long: Putative ankyrin repeat protein NMB1133/NMB1171 (253 aa).

ANK repeat units lie at residues 196–225 (DGYT…NPAS) and 229–252 (EGYT…LEPR).

This chain is Putative ankyrin repeat protein NMB1133/NMB1171, found in Neisseria meningitidis serogroup B (strain ATCC BAA-335 / MC58).